Reading from the N-terminus, the 215-residue chain is Small ribosomal subunit protein uS5 (215 aa).

Gly residues predominate over residues 1-12 (MSGTQRRGGGAG). The segment at 1–31 (MSGTQRRGGGAGGERRGRDNRRGQNDRNRNQ) is disordered. Residues 13–31 (GERRGRDNRRGQNDRNRNQ) show a composition bias toward basic and acidic residues. Residues 34–97 (YLERVVAINR…EEAKKHFFKV (64 aa)) form the S5 DRBM domain.

Belongs to the universal ribosomal protein uS5 family. Part of the 30S ribosomal subunit. Contacts proteins S4 and S8.

With S4 and S12 plays an important role in translational accuracy. Functionally, located at the back of the 30S subunit body where it stabilizes the conformation of the head with respect to the body. The sequence is that of Small ribosomal subunit protein uS5 from Cutibacterium acnes (strain DSM 16379 / KPA171202) (Propionibacterium acnes).